The primary structure comprises 430 residues: MATIILGSQWGDEGKGKLTDILCPKAQICARAAGGHNAGHSIVANGVEYDFHLLPSGLVNPNCMNLIGSSVVFHVPSFFSELSKLEEKGLTDVHNRILVSDRCHVDFDLHAAVDGLEEVELGDRKIGTTGRGIGPSYSTKMARSGVRIHEIFNEEIFERKLRQLANGYKKRFGDLLKYDVEEEIARFKEYRVKLAPYTVDAVQYMKQAQDRGYKILIEGANALMLDIDYGTYPYVTSSNTGLGGIITGLSINPTKIDNIIGVVKAYTTRVGGGPFKTEDLEEAGTKLQDIGREWGVSTGRKRRCGWLDLVVLKYSTAINNYTALNLTKLDILDTFETIKVAVAYKDPQTGEEVEYFPADLGILDSLEVVYKELPGWNKPITDCKTYYDLPKEARAYVEFIEEFVGVPICYIGTGPKREDMIVRKASAIKE.

Residues 11–17 (GDEGKGK) and 39–41 (GHS) each bind GTP. Asp-12 functions as the Proton acceptor in the catalytic mechanism. Residues Asp-12 and Gly-39 each contribute to the Mg(2+) site. Residues 12 to 15 (DEGK), 37 to 40 (NAGH), Thr-129, Arg-143, Asn-221, Thr-236, and Arg-300 each bind IMP. The Proton donor role is filled by His-40. 296–302 (VSTGRKR) is a substrate binding site. GTP-binding positions include Arg-302, 328-330 (KLD), and 412-414 (GTG).

The protein belongs to the adenylosuccinate synthetase family. In terms of assembly, homodimer. It depends on Mg(2+) as a cofactor.

It localises to the cytoplasm. The enzyme catalyses IMP + L-aspartate + GTP = N(6)-(1,2-dicarboxyethyl)-AMP + GDP + phosphate + 2 H(+). It functions in the pathway purine metabolism; AMP biosynthesis via de novo pathway; AMP from IMP: step 1/2. Plays an important role in the de novo pathway and in the salvage pathway of purine nucleotide biosynthesis. Catalyzes the first committed step in the biosynthesis of AMP from IMP. This Sordaria macrospora (strain ATCC MYA-333 / DSM 997 / K(L3346) / K-hell) protein is Adenylosuccinate synthetase.